The sequence spans 437 residues: Probable E3 ubiquitin-protein ligase TRIML2 (437 aa).

The B box-type zinc-finger motif lies at 14 to 55; that stretch reads TEDAYCETHLEPTRLFCDVDQITLCSKCFQSQEHKHHMVCGI. Zn(2+) contacts are provided by Cys19, His22, Cys41, and His47. A coiled-coil region spans residues 55-200; that stretch reads IQEAAENYRK…IVELEKKCGE (146 aa). Positions 231–429 constitute a B30.2/SPRY domain; the sequence is DLSLCHIRGL…DSLTILQHGP (199 aa).

It carries out the reaction S-ubiquitinyl-[E2 ubiquitin-conjugating enzyme]-L-cysteine + [acceptor protein]-L-lysine = [E2 ubiquitin-conjugating enzyme]-L-cysteine + N(6)-ubiquitinyl-[acceptor protein]-L-lysine.. The protein operates within protein modification; protein ubiquitination. The chain is Probable E3 ubiquitin-protein ligase TRIML2 from Homo sapiens (Human).